A 194-amino-acid chain; its full sequence is Mitochondrial import inner membrane translocase subunit Tim22 (194 aa).

2 disulfides stabilise this stretch: C69/C141 and C160/C179. 3 consecutive transmembrane segments (helical) span residues 74-94, 123-143, and 170-190; these read VLAC…TAGI, MSYA…ECLV, and AGVK…AAID.

Belongs to the Tim17/Tim22/Tim23 family. As to quaternary structure, component of the TIM22 complex, whose core is composed of TIMM22, associated with peripheral protein FXC1/TIMM10B and the 70 kDa heterohexamer. In most cases, the 70 kDa complex is composed of TIMM9 and TIMM10 (TIMM10A or TIMM10B). A small fraction of the 70 kDa complex is composed of TIMM8 (TIMM8A/DDP1 or TIMM8B/DDP2) and TIMM13. The TIM22 complex also contains AGK and TIMM29. Interacts directly with TIMM9, TIMM10A and FXC1/TIMM10B. Interacts (when oxidized) with TIMM29; interaction is direct. Post-translationally, disulfide bonds promote efficient assembly of the TIM22 complex.

Its subcellular location is the mitochondrion inner membrane. Functionally, essential core component of the TIM22 complex, a complex that mediates the import and insertion of multi-pass transmembrane proteins into the mitochondrial inner membrane. In the TIM22 complex, it constitutes the voltage-activated and signal-gated channel. Forms a twin-pore translocase that uses the membrane potential as external driving force in 2 voltage-dependent steps. This chain is Mitochondrial import inner membrane translocase subunit Tim22 (Timm22), found in Mus musculus (Mouse).